A 622-amino-acid polypeptide reads, in one-letter code: Palmitoyltransferase ZDHHC13 (622 aa).

Met-1 is subject to N-acetylmethionine. The Cytoplasmic portion of the chain corresponds to 1–291; sequence MEGPGLGSQC…RLWRWLHKCE (291 aa). 7 ANK repeats span residues 43-78, 81-110, 115-144, 148-177, 181-211, 216-245, and 249-277; these read PLIEDSSNCDIVKATQYGIFERCKELVEAGYDVRQP, ENVSLLHWAAINNRLELVKFYISKGAVIDQ, LNSTPLHWAIRQGHLPMVILLLQHGADPTL, EGFSSIHLAVLFQHMPIIAYLISKGQSVNM, NGQTPLMLSAYKVIGPEPTGFLLKFNPSLSV, HQNTPLHWAVAAGNVSAVDKLLEAGSSLDI, and KGETPLDMALQSKNQLISHMLRTEAKMRA. Residues 292–312 form a helical membrane-spanning segment; that stretch reads LFLLLILSMITLWAVGYILDF. The Lumenal portion of the chain corresponds to 313–320; the sequence is NSDSWLLK. Residues 321–341 form a helical membrane-spanning segment; sequence GCLLVALFFLTSLFPRFLVGY. At 342-347 the chain is on the cytoplasmic side; it reads KNLVYL. The helical transmembrane segment at 348 to 368 threads the bilayer; sequence PTVFLLSSIFWIFMTWFILFF. The Lumenal portion of the chain corresponds to 369-371; that stretch reads PDT. Residues 372–392 form a helical membrane-spanning segment; that stretch reads AGSPLYFAFIFSIMAFLYFFY. Residues 393–470 are Cytoplasmic-facing; sequence KTWATDPGFT…RCIGFGNHHH (78 aa). The DHHC domain occupies 426–476; that stretch reads TFCTSCLIRKPLRSLHCHVCNSCVARFDQHCFWTGRCIGFGNHHHYIFFLL. The S-palmitoyl cysteine intermediate role is filled by Cys-456. The helical transmembrane segment at 471–491 threads the bilayer; that stretch reads YIFFLLSLSMVCDWIIYGSFV. The Lumenal portion of the chain corresponds to 492–518; sequence YWSNHCATTFKEDGLWTYLNQIVACSP. A helical transmembrane segment spans residues 519–539; that stretch reads WVLYIFMLAAFHFSWSTFLLI. Topologically, residues 540 to 622 are cytoplasmic; the sequence is NQLFQIAFLG…PAKEKVLRSV (83 aa).

It belongs to the DHHC palmitoyltransferase family. AKR/ZDHHC17 subfamily. Interacts (via ANK repeats) with CLIP3. Interacts (via ANK repeats) with DNAJC5 (via C-terminus). Interacts (via ANK repeats) with HTT. Interacts (via ANK repeats) with MAP6. Interacts (via ANK repeats) with SNAP23. Interacts (via ANK repeats) with SNAP25. May interact (via ANK repeats) with SPRED2. Expressed in most adult tissues, but at low levels in the liver, skin, and lung.

The protein resides in the golgi apparatus membrane. It is found in the cytoplasmic vesicle membrane. It catalyses the reaction L-cysteinyl-[protein] + hexadecanoyl-CoA = S-hexadecanoyl-L-cysteinyl-[protein] + CoA. In terms of biological role, palmitoyltransferase that could catalyze the addition of palmitate onto various protein substrates. Palmitoyltransferase for HTT and GAD2. May play a role in Mg(2+) transport. The sequence is that of Palmitoyltransferase ZDHHC13 from Mus musculus (Mouse).